Here is a 305-residue protein sequence, read N- to C-terminus: Ribosomal RNA small subunit methyltransferase H (305 aa).

Residues 33 to 35, D51, F82, D96, and Q103 each bind S-adenosyl-L-methionine; that span reads GGY.

Belongs to the methyltransferase superfamily. RsmH family.

It is found in the cytoplasm. The enzyme catalyses cytidine(1402) in 16S rRNA + S-adenosyl-L-methionine = N(4)-methylcytidine(1402) in 16S rRNA + S-adenosyl-L-homocysteine + H(+). Its function is as follows. Specifically methylates the N4 position of cytidine in position 1402 (C1402) of 16S rRNA. This Rickettsia bellii (strain OSU 85-389) protein is Ribosomal RNA small subunit methyltransferase H.